We begin with the raw amino-acid sequence, 517 residues long: Putative thymidine phosphorylase (517 aa).

The protein belongs to the thymidine/pyrimidine-nucleoside phosphorylase family. Type 2 subfamily.

The catalysed reaction is thymidine + phosphate = 2-deoxy-alpha-D-ribose 1-phosphate + thymine. The polypeptide is Putative thymidine phosphorylase (Legionella pneumophila (strain Corby)).